The primary structure comprises 357 residues: D(4) dopamine receptor (357 aa).

The Extracellular segment spans residues 1–32; the sequence is MGNRSAADADGLLAGRGPGTGGGAGSPGAAAA. Asparagine 3 carries N-linked (GlcNAc...) asparagine glycosylation. A helical membrane pass occupies residues 33–55; sequence LVGGVLLIGAVLAGNALVCVSVA. The Cytoplasmic portion of the chain corresponds to 56–65; the sequence is AERALQTPTN. A helical membrane pass occupies residues 66–88; it reads YFIVSLAAADLLLALLVLPLFVY. Aspartate 75 serves as a coordination point for Na(+). Residues 89 to 104 are Extracellular-facing; the sequence is SEVQGGVWQFSPGLCD. A disulfide bond links cysteine 103 and cysteine 180. Residues 105–126 form a helical membrane-spanning segment; that stretch reads ALMAMDVMLCTASIFNLCAISA. Serine 117 lines the Na(+) pocket. Topologically, residues 127–146 are cytoplasmic; sequence DRFVAVAVPLSYNRQSGGGR. A helical transmembrane segment spans residues 147 to 170; that stretch reads QLLLIGATWLLSAAVAAPVLCGLN. Residues 171-186 lie on the Extracellular side of the membrane; sequence DARGRDPAVCRLEDRD. The helical transmembrane segment at 187 to 208 threads the bilayer; sequence YVVYSSVCSFFLPCPVMLLLYW. The Cytoplasmic segment spans residues 209-284; it reads ATFRGLRRWE…ITGRERKAMR (76 aa). Residues 225–261 are disordered; it reads LHGRRPRRPSGPGPPPPEAVETPEAPEAIPTPDATLA. Pro residues predominate over residues 233-242; that stretch reads PSGPGPPPPE. The span at 243–259 shows a compositional bias: low complexity; it reads AVETPEAPEAIPTPDAT. The helical transmembrane segment at 285-307 threads the bilayer; sequence VLPVVVGAFLVCWTPFFVVHITG. Over 308-316 the chain is Extracellular; the sequence is ALCPACAVP. Cysteine 310 and cysteine 313 are joined by a disulfide. Residues 317-339 traverse the membrane as a helical segment; that stretch reads PRLVSAVTWLGYVNSALNPLIYT. Residues 340-357 lie on the Cytoplasmic side of the membrane; the sequence is VFNAEFRAVFRKALRLCC. The S-palmitoyl cysteine moiety is linked to residue cysteine 357.

Belongs to the G-protein coupled receptor 1 family. As to quaternary structure, forms homo- and heterooligomers with DRD2. D4.7 allele exhibits higher affinity for homodimers compared to DRD2 heterodimers, while alleles D42. and 4.4 have similar affinities for both. The interaction with DRD2 may modulate agonist-induced downstream signaling. Interacts with CLIC6. Interacts with GPRASP1. May interact with ADORA2A. Interacts with KLHL12. Post-translationally, polyubiquitinated by the BCR(KLHL12) E3 ubiquitin ligase complex: polyubiquitination does not lead to degradation of DRD4 protein. In terms of processing, palmitoylated. Palmitoylation of the C-terminal Cys is important for normal expression at the cell membrane.

The protein localises to the cell membrane. Its function is as follows. Dopamine receptor responsible for neuronal signaling in the mesolimbic system of the brain, an area of the brain that regulates emotion and complex behavior. Activated by dopamine, but also by epinephrine and norepinephrine, and by numerous synthetic agonists and drugs. Agonist binding triggers signaling via G proteins that inhibit adenylyl cyclase. Modulates the circadian rhythm of contrast sensitivity by regulating the rhythmic expression of NPAS2 in the retinal ganglion cells. This is D(4) dopamine receptor (DRD4) from Mustela putorius furo (European domestic ferret).